The chain runs to 402 residues: Multidrug resistance protein MdtH (402 aa).

Over 1 to 12 (MSRVSQARNLGK) the chain is Cytoplasmic. Residues 13–33 (YFLLIDNMLVVLGFFVVFPLI) form a helical membrane-spanning segment. The Periplasmic segment spans residues 34–98 (SIRFVDQMGW…GFATMGIAHE (65 aa)). A helical transmembrane segment spans residues 99-116 (PWLLWFSCLLSGLGGTLF). At 117-138 (DPPRSALVVKLIRPQQRGRFFS) the chain is on the cytoplasmic side. Residues 139-159 (LLMMQDSAGAVIGALLGSWLL) traverse the membrane as a helical segment. Topologically, residues 160-164 (QYDFR) are periplasmic. Residues 165-185 (LVCATGAVLFVLCAAFNAWLL) traverse the membrane as a helical segment. The Cytoplasmic portion of the chain corresponds to 186–213 (PAWKLSTVRTPVREGMTRVMRDKRFVTY). Residues 214 to 234 (VLTLAGYYMLAVQVMLMLPIM) traverse the membrane as a helical segment. Residues 235-243 (VNDVAGAPS) lie on the Periplasmic side of the membrane. Residues 244 to 264 (AVKWMYAIEACLSLTLLYPIA) traverse the membrane as a helical segment. The Cytoplasmic portion of the chain corresponds to 265-276 (RWSEKHFRLEHR). A helical transmembrane segment spans residues 277 to 297 (LMAGLLIMSLSMMPVGMVSGL). The Periplasmic portion of the chain corresponds to 298-299 (QQ). The helical transmembrane segment at 300-320 (LFTLICLFYIGSIIAEPARET) threads the bilayer. Residues 321 to 339 (LSASLADARARGSYMGFSR) lie on the Cytoplasmic side of the membrane. The helical transmembrane segment at 340–360 (LGLAIGGAIGYIGGGWLFDLG) threads the bilayer. Topologically, residues 361–367 (KSAHQPE) are periplasmic. Residues 368–388 (LPWMMLGIIGIFTFLALGWQF) traverse the membrane as a helical segment. Residues 389 to 402 (SQKRTARRLLERDA) are Cytoplasmic-facing.

This sequence belongs to the major facilitator superfamily. DHA1 family. MdtH (TC 2.A.1.2.21) subfamily.

Its subcellular location is the cell inner membrane. Confers resistance to norfloxacin and enoxacin. The protein is Multidrug resistance protein MdtH of Escherichia coli O7:K1 (strain IAI39 / ExPEC).